The primary structure comprises 20 residues: Chemoheterotroph-specific protein (20 aa).

The polypeptide is Chemoheterotroph-specific protein (Thiomonas delicata (Thiomonas cuprina)).